The primary structure comprises 162 residues: Translocator protein 2 (162 aa).

5 helical membrane passes run 3-23 (LQGP…CMLI), 44-64 (VILL…YLVW), 79-99 (LGLY…FLAA), 103-123 (GLAL…VFIW), and 129-149 (LAAL…AITY).

It belongs to the TspO/BZRP family. As to quaternary structure, homotetramer. May also form homodimer. Expressed in liver, bone marrow and spleen. In spleen, detected in red pulp but not in white pulp.

It localises to the endoplasmic reticulum membrane. The protein resides in the cell membrane. Cholesterol-binding protein involved in the redistribution of cholesterol from lipid droplets to the endoplasmic reticulum. Required to meet cholesterol demands during erythropoietic differentiation. May play a role in transport processes at the plasma membrane of erythrocytes, including regulating VDAC-mediated ATP export, and import of the heme precursors protoporphyrin IX and 5-aminolevulinic acid. This is Translocator protein 2 (Tspo2) from Mus musculus (Mouse).